A 495-amino-acid polypeptide reads, in one-letter code: MTAKHNQYVMALDLGTTGNRAILFDYEGNIVGQAYKELTQFYPKAGWVEHDALEIWRDTKTVMQEVVQKTAIQPQQIVAIGLTVQRETCLLWDKTTGQPLHPAIVWQDRRTAHFCGELTAAGYVDEIYERTGLVLDAYFSGTKLHWLLDWVKQSKSVDPANLLAGTIDSWALWNLTGGKVHRTDHSNASRTMVLNLDSLIWDEKLLDLFTIPAQIMPEVQPSLSYFGVTDPEILGVEIPITAIFGDQQAALYAHGCDRPGLLKCTYGTGAFLVANTGQTVTRSQHRLLSTVAWTQTNRDKSLTRDYALEGSMFTAGSCVQWLRDKLGLIESAAASESLARSVDSNGGVYFVPALSGLGAPHWDMNACGAFLGLTAGVTKAHLVRSVLEAIAFQAREVVEAINQDSPAPIQQLKVDGGACNNDFLMQCQADVLGIPVERPAVLDATAQGAAFGAGLKIGWNQLQIRFFRTFHHGTISLICLQFLPMRIQEGVSVDQ.

An ADP-binding site is contributed by T16. Residues T16 and T17 each contribute to the ATP site. T16 contacts sn-glycerol 3-phosphate. R20 is an ADP binding site. R86, E87, Y138, and D246 together coordinate sn-glycerol 3-phosphate. Glycerol contacts are provided by R86, E87, Y138, D246, and Q247. ADP-binding residues include T268 and G316. ATP-binding residues include T268, G316, Q320, and G417. ADP-binding residues include G417 and N421.

It belongs to the FGGY kinase family.

It carries out the reaction glycerol + ATP = sn-glycerol 3-phosphate + ADP + H(+). Its pathway is polyol metabolism; glycerol degradation via glycerol kinase pathway; sn-glycerol 3-phosphate from glycerol: step 1/1. Its activity is regulated as follows. Inhibited by fructose 1,6-bisphosphate (FBP). Key enzyme in the regulation of glycerol uptake and metabolism. Catalyzes the phosphorylation of glycerol to yield sn-glycerol 3-phosphate. The sequence is that of Glycerol kinase from Synechocystis sp. (strain ATCC 27184 / PCC 6803 / Kazusa).